The sequence spans 494 residues: Cobyric acid synthase (494 aa).

Residues 249 to 443 enclose the GATase cobBQ-type domain; the sequence is EINVTILRLP…LHGIFDNGAW (195 aa). The Nucleophile role is filled by C330. The active site involves H435.

The protein belongs to the CobB/CobQ family. CobQ subfamily.

The protein operates within cofactor biosynthesis; adenosylcobalamin biosynthesis. Its function is as follows. Catalyzes amidations at positions B, D, E, and G on adenosylcobyrinic A,C-diamide. NH(2) groups are provided by glutamine, and one molecule of ATP is hydrogenolyzed for each amidation. This is Cobyric acid synthase from Crocosphaera subtropica (strain ATCC 51142 / BH68) (Cyanothece sp. (strain ATCC 51142)).